A 348-amino-acid chain; its full sequence is D-erythrose-4-phosphate dehydrogenase (348 aa).

Residues 12 to 13 (RI) and Arg81 contribute to the NAD(+) site. Substrate is bound by residues 154 to 156 (SCT), Arg200, 213 to 214 (TK), and Arg236. Cys155 acts as the Nucleophile in catalysis. Asn318 provides a ligand contact to NAD(+).

The protein belongs to the glyceraldehyde-3-phosphate dehydrogenase family. Epd subfamily. In terms of assembly, homotetramer.

It localises to the cytoplasm. The catalysed reaction is D-erythrose 4-phosphate + NAD(+) + H2O = 4-phospho-D-erythronate + NADH + 2 H(+). Its pathway is cofactor biosynthesis; pyridoxine 5'-phosphate biosynthesis; pyridoxine 5'-phosphate from D-erythrose 4-phosphate: step 1/5. Functionally, catalyzes the NAD-dependent conversion of D-erythrose 4-phosphate to 4-phosphoerythronate. The chain is D-erythrose-4-phosphate dehydrogenase from Salmonella agona (strain SL483).